We begin with the raw amino-acid sequence, 344 residues long: tRNA N6-adenosine threonylcarbamoyltransferase (344 aa).

His119 and His123 together coordinate Fe cation. Substrate contacts are provided by residues 141 to 145, Asp174, Gly187, Asp191, and Asn280; that span reads VVSGG. Fe cation is bound at residue Asp310.

This sequence belongs to the KAE1 / TsaD family. Fe(2+) is required as a cofactor.

It is found in the cytoplasm. It catalyses the reaction L-threonylcarbamoyladenylate + adenosine(37) in tRNA = N(6)-L-threonylcarbamoyladenosine(37) in tRNA + AMP + H(+). Its function is as follows. Required for the formation of a threonylcarbamoyl group on adenosine at position 37 (t(6)A37) in tRNAs that read codons beginning with adenine. Is involved in the transfer of the threonylcarbamoyl moiety of threonylcarbamoyl-AMP (TC-AMP) to the N6 group of A37, together with TsaE and TsaB. TsaD likely plays a direct catalytic role in this reaction. The chain is tRNA N6-adenosine threonylcarbamoyltransferase from Listeria monocytogenes serotype 4b (strain CLIP80459).